Here is a 467-residue protein sequence, read N- to C-terminus: Hydroxyacid-oxoacid transhydrogenase, mitochondrial (467 aa).

Lysine 445 is subject to N6-acetyllysine. Position 452 is a phosphoserine (serine 452).

The protein belongs to the iron-containing alcohol dehydrogenase family. Hydroxyacid-oxoacid transhydrogenase subfamily. As to expression, expressed in kidney and liver.

The protein localises to the mitochondrion. The enzyme catalyses (S)-3-hydroxybutanoate + 2-oxoglutarate = (R)-2-hydroxyglutarate + acetoacetate. The catalysed reaction is 4-hydroxybutanoate + 2-oxoglutarate = (R)-2-hydroxyglutarate + succinate semialdehyde. Its function is as follows. Catalyzes the cofactor-independent reversible oxidation of gamma-hydroxybutyrate (GHB) to succinic semialdehyde (SSA) coupled to reduction of 2-ketoglutarate (2-KG) to D-2-hydroxyglutarate (D-2-HG). L-3-hydroxybutyrate (L-3-OHB) is also a substrate for HOT when using 2-KG as hydrogen acceptor, resulting in the formation of D-2-HG. This is Hydroxyacid-oxoacid transhydrogenase, mitochondrial (Adhfe1) from Rattus norvegicus (Rat).